The chain runs to 4388 residues: Intermembrane lipid transfer protein VPS13D (4388 aa).

A Chorein N-terminal domain is found at 2–115 (LEGLVAWVLN…ERERKKALLQ (114 aa)). Serine 663 bears the Phosphoserine mark. Residues 745–796 (QDNSRRKSRDGSASEETQFSDDEYKTPLATPPNTPPPESSSSNGEKTPPFSG) are disordered. The span at 747-756 (NSRRKSRDGS) shows a compositional bias: basic and acidic residues. The span at 773-782 (ATPPNTPPPE) shows a compositional bias: pro residues. Phosphoserine is present on residues serine 1034, serine 1038, serine 1042, serine 1138, and serine 1341. The disordered stretch occupies residues 1563–1582 (ASATSSPCPDSPLPPLSTCG). Serine 1598, serine 1603, and serine 1699 each carry phosphoserine. Disordered stretches follow at residues 1741 to 1771 (RPTS…VDEP), 2070 to 2108 (QDKE…QFTM), and 2122 to 2145 (FVPS…ESSS). A Phosphothreonine modification is found at threonine 1761. Position 1765 is a phosphoserine (serine 1765). Residues 2123–2144 (VPSTSTKQQGPQPTLSVGQESS) show a composition bias toward polar residues. A phosphoserine mark is found at serine 2435, serine 2671, serine 2861, serine 2864, and serine 2983. One can recognise a UBA domain in the interval 2633-2676 (TLDPVLELQLARLQELGFSMDDCRKALLACQGQLKKAASWLFKN). The SHR-BD domain maps to 3276–3558 (LKIFISAPYW…LDYAWDEPTL (283 aa)). Lysine 3524 is modified (N6-acetyllysine).

This sequence belongs to the VPS13 family. Widely expressed.

Mediates the transfer of lipids between membranes at organelle contact sites. Functions in promoting mitochondrial clearance by mitochondrial autophagy (mitophagy), also possibly by positively regulating mitochondrial fission. Mitophagy plays an important role in regulating cell health and mitochondrial size and homeostasis. The protein is Intermembrane lipid transfer protein VPS13D of Homo sapiens (Human).